The following is a 629-amino-acid chain: Phosphomethylpyrimidine synthase (629 aa).

Residues Asn-215, Met-244, Tyr-273, His-309, 329-331 (SRG), 370-373 (DGLR), and Glu-409 contribute to the substrate site. Residue His-413 participates in Zn(2+) binding. Tyr-436 provides a ligand contact to substrate. His-477 is a binding site for Zn(2+). Residues Cys-557, Cys-560, and Cys-565 each contribute to the [4Fe-4S] cluster site. The interval 589 to 610 (ENIKRETSAEEAEEAREGMSDM) is disordered.

The protein belongs to the ThiC family. In terms of assembly, homodimer. It depends on [4Fe-4S] cluster as a cofactor.

The enzyme catalyses 5-amino-1-(5-phospho-beta-D-ribosyl)imidazole + S-adenosyl-L-methionine = 4-amino-2-methyl-5-(phosphooxymethyl)pyrimidine + CO + 5'-deoxyadenosine + formate + L-methionine + 3 H(+). It participates in cofactor biosynthesis; thiamine diphosphate biosynthesis. In terms of biological role, catalyzes the synthesis of the hydroxymethylpyrimidine phosphate (HMP-P) moiety of thiamine from aminoimidazole ribotide (AIR) in a radical S-adenosyl-L-methionine (SAM)-dependent reaction. This is Phosphomethylpyrimidine synthase from Erythrobacter litoralis (strain HTCC2594).